Consider the following 563-residue polypeptide: Arginine--tRNA ligase (563 aa).

Residues 121-131 (PNIAKPFSIGH) carry the 'HIGH' region motif.

This sequence belongs to the class-I aminoacyl-tRNA synthetase family. As to quaternary structure, monomer.

The protein resides in the cytoplasm. It carries out the reaction tRNA(Arg) + L-arginine + ATP = L-arginyl-tRNA(Arg) + AMP + diphosphate. This Streptococcus pyogenes serotype M12 (strain MGAS2096) protein is Arginine--tRNA ligase.